The following is a 383-amino-acid chain: S-adenosylmethionine synthase (383 aa).

His-15 lines the ATP pocket. Asp-17 lines the Mg(2+) pocket. Glu-43 is a K(+) binding site. Positions 56 and 99 each coordinate L-methionine. A flexible loop region spans residues 99–109 (QSPDINQGVDR). ATP is bound by residues 164-166 (DAK), 230-231 (RF), Asp-239, 245-246 (RK), Ala-262, and Lys-266. Asp-239 contacts L-methionine. An L-methionine-binding site is contributed by Lys-270.

The protein belongs to the AdoMet synthase family. In terms of assembly, homotetramer; dimer of dimers. Requires Mg(2+) as cofactor. K(+) is required as a cofactor.

It is found in the cytoplasm. It carries out the reaction L-methionine + ATP + H2O = S-adenosyl-L-methionine + phosphate + diphosphate. It functions in the pathway amino-acid biosynthesis; S-adenosyl-L-methionine biosynthesis; S-adenosyl-L-methionine from L-methionine: step 1/1. In terms of biological role, catalyzes the formation of S-adenosylmethionine (AdoMet) from methionine and ATP. The overall synthetic reaction is composed of two sequential steps, AdoMet formation and the subsequent tripolyphosphate hydrolysis which occurs prior to release of AdoMet from the enzyme. The chain is S-adenosylmethionine synthase from Shewanella denitrificans (strain OS217 / ATCC BAA-1090 / DSM 15013).